The following is a 259-amino-acid chain: Eukaryotic translation initiation factor 4E1 (259 aa).

The tract at residues 1–70 is disordered; it reads MQSDFHRMKN…TATTTAPAGD (70 aa). The span at 18–27 shows a compositional bias: polar residues; sequence FKTSAPSTEQ. Over residues 41–51 the composition is skewed to basic and acidic residues; sequence EAKDVKPKEDP. A compositionally biased stretch (low complexity) spans 54–70; it reads TGEPAGNTATTTAPAGD. MRNA contacts are provided by residues 100–101, 146–147, and 199–204; these read WE and RGKSNK.

Belongs to the eukaryotic initiation factor 4E family. In terms of assembly, eIF4F is a multi-subunit complex, the composition of which varies with external and internal environmental conditions. It is composed of at least eIF4A, eIF4E1 and eIF4G1. Recruited by cup in oocytes and in early embryos, preventing the interaction with eIF4G. The interaction with cup therefore prevents the translation of key transcripts such as oskar (osk) and nanos (nos) in some regions in the early embryo. Interacts with mxt. Interacts with 4E-T and Thor. Forms a RNP containing at least me31B, eIF4E1, cup, tral and pAbp; this interaction is required for the translational silencing of maternal mRNAs during the maternal-to-zygotic transition. Phosphorylation increases the ability of the protein to bind to mRNA caps and to form the eIF4F complex. As to expression, expressed at the posterior end of developing oocytes (at protein level). Preferential expression in the pole cells, at different developmental stages.

The protein localises to the cytoplasm. It is found in the cytoplasmic ribonucleoprotein granule. Its subcellular location is the nucleus. It localises to the nuclear body. Functionally, recognizes and binds the 7-methylguanosine (m7G)-containing mRNA cap during an early step in the initiation of protein synthesis and facilitates ribosome binding by inducing the unwinding of the mRNAs secondary structures. In 0-1 hour embryos, forms a complex with me31B, cup, tral and pAbp which binds to various mRNAs including maternal mRNAs, and down-regulates their expression during the maternal-to-zygotic transition. This Drosophila melanogaster (Fruit fly) protein is Eukaryotic translation initiation factor 4E1.